The primary structure comprises 337 residues: GTPase Obg (337 aa).

One can recognise an Obg domain in the interval 1-161 (MNLTDNAVIF…FKIKLDFVFL (161 aa)). The OBG-type G domain maps to 162-333 (ADVGLFGYSN…LINKILLFLE (172 aa)). GTP is bound by residues 168-175 (GYSNTGRS), 193-197 (FTTLF), 214-217 (DIPS), 282-285 (NKTD), and 314-316 (SLN). 2 residues coordinate Mg(2+): serine 175 and threonine 195.

Belongs to the TRAFAC class OBG-HflX-like GTPase superfamily. OBG GTPase family. Monomer. Mg(2+) serves as cofactor.

The protein localises to the cytoplasm. In terms of biological role, an essential GTPase which binds GTP, GDP and possibly (p)ppGpp with moderate affinity, with high nucleotide exchange rates and a fairly low GTP hydrolysis rate. Plays a role in control of the cell cycle, stress response, ribosome biogenesis and in those bacteria that undergo differentiation, in morphogenesis control. The chain is GTPase Obg from Wigglesworthia glossinidia brevipalpis.